The following is a 419-amino-acid chain: MINRFSIEKVKGLEIIDSRGNPTIRVFVRTNDGVESFGDAPAGASKGTREAIEVRDENGLTVKRAVDIANYIIDPALHGIDVREQGIIDKILIDIDSTENKSKLGGNTIIATSIAALKTSSKALGLEVFKYIAGPRLPKIPIPLLNIINGGLHAGNKLKIQEFIILPIKFNTFKEAFFAAIEVYRNLKGLISERYGKIYTAVGDEGGFSPPLEETREALDLIYTSINNAGYQGKIYMGMDAAASDFYDPKKEKYIIDGKELNPTQLLEFYLDLAKEYPIVYLEDPFEENSFDMFGELQNKLNSTIVTGDDLYTTNIKYLKIGIEKRSTKGVIVKPNQVGTISETFEFTNLARRNSIKLVTSHRSGETEDNFIAEFAVGIESDFIKTGAPARGERTSKYNKLLEIENKFGLEYGGKYFYL.

Residue Q161 participates in (2R)-2-phosphoglycerate binding. E205 functions as the Proton donor in the catalytic mechanism. 3 residues coordinate Mg(2+): D240, E283, and D309. (2R)-2-phosphoglycerate is bound by residues K334, R363, S364, and K385. Catalysis depends on K334, which acts as the Proton acceptor.

The protein belongs to the enolase family. Requires Mg(2+) as cofactor.

It localises to the cytoplasm. It is found in the secreted. Its subcellular location is the cell surface. The catalysed reaction is (2R)-2-phosphoglycerate = phosphoenolpyruvate + H2O. Its pathway is carbohydrate degradation; glycolysis; pyruvate from D-glyceraldehyde 3-phosphate: step 4/5. Functionally, catalyzes the reversible conversion of 2-phosphoglycerate (2-PG) into phosphoenolpyruvate (PEP). It is essential for the degradation of carbohydrates via glycolysis. The protein is Enolase of Saccharolobus islandicus (strain Y.G.57.14 / Yellowstone #1) (Sulfolobus islandicus).